The chain runs to 114 residues: Large ribosomal subunit protein bL17 (114 aa).

Belongs to the bacterial ribosomal protein bL17 family. Part of the 50S ribosomal subunit. Contacts protein L32.

The chain is Large ribosomal subunit protein bL17 from Clostridium acetobutylicum (strain ATCC 824 / DSM 792 / JCM 1419 / IAM 19013 / LMG 5710 / NBRC 13948 / NRRL B-527 / VKM B-1787 / 2291 / W).